The primary structure comprises 183 residues: NADH-ubiquinone oxidoreductase 20.8 kDa subunit (183 aa).

CHCH domains lie at 44 to 87 (GARC…IADI) and 88 to 130 (NKSC…LGLK). 4 short sequence motifs (cx9C motif) span residues 47-57 (CRDYNDDFMQC), 69-79 (CLKEGRRVTRC), 91-101 (CLEEFRKHWTC), and 112-122 (CRPAEWKLNKC). Intrachain disulfides connect C47-C79, C57-C69, C91-C122, and C101-C112. Residues 161–183 (EPFVPPTQTGDNNKAPAAASSSS) are disordered.

The protein belongs to the complex I NDUFA8 subunit family. In terms of assembly, complex I is composed of about 40 different subunits. This is a component of the hydrophobic fraction. Iron-sulfur cluster serves as cofactor.

The protein localises to the mitochondrion inner membrane. In terms of biological role, accessory subunit of the mitochondrial membrane respiratory chain NADH dehydrogenase (Complex I), that is believed not to be involved in catalysis. Complex I functions in the transfer of electrons from NADH to the respiratory chain. The immediate electron acceptor for the enzyme is believed to be ubiquinone. The polypeptide is NADH-ubiquinone oxidoreductase 20.8 kDa subunit (Neurospora crassa (strain ATCC 24698 / 74-OR23-1A / CBS 708.71 / DSM 1257 / FGSC 987)).